Here is a 122-residue protein sequence, read N- to C-terminus: Large ribosomal subunit protein uL14 (122 aa).

It belongs to the universal ribosomal protein uL14 family. In terms of assembly, part of the 50S ribosomal subunit. Forms a cluster with proteins L3 and L19. In the 70S ribosome, L14 and L19 interact and together make contacts with the 16S rRNA in bridges B5 and B8.

Its function is as follows. Binds to 23S rRNA. Forms part of two intersubunit bridges in the 70S ribosome. In Clostridium tetani (strain Massachusetts / E88), this protein is Large ribosomal subunit protein uL14.